The sequence spans 910 residues: DNA mismatch repair protein MutS (910 aa).

615-622 (GPNMAGKS) is an ATP binding site.

Belongs to the DNA mismatch repair MutS family.

In terms of biological role, this protein is involved in the repair of mismatches in DNA. It is possible that it carries out the mismatch recognition step. This protein has a weak ATPase activity. The chain is DNA mismatch repair protein MutS from Clostridium perfringens (strain ATCC 13124 / DSM 756 / JCM 1290 / NCIMB 6125 / NCTC 8237 / Type A).